The primary structure comprises 185 residues: Elongation factor P (185 aa).

This sequence belongs to the elongation factor P family.

The protein localises to the cytoplasm. Its pathway is protein biosynthesis; polypeptide chain elongation. In terms of biological role, involved in peptide bond synthesis. Stimulates efficient translation and peptide-bond synthesis on native or reconstituted 70S ribosomes in vitro. Probably functions indirectly by altering the affinity of the ribosome for aminoacyl-tRNA, thus increasing their reactivity as acceptors for peptidyl transferase. The protein is Elongation factor P of Bacillus velezensis (strain DSM 23117 / BGSC 10A6 / LMG 26770 / FZB42) (Bacillus amyloliquefaciens subsp. plantarum).